A 334-amino-acid chain; its full sequence is Malate dehydrogenase, cytoplasmic (334 aa).

Ser2 carries the post-translational modification N-acetylserine. NAD(+)-binding positions include 11-17 and Asp42; that span reads GAAGQIA. Substrate contacts are provided by Arg92 and Arg98. Asn105 is an NAD(+) binding site. Lys110 bears the N6-succinyllysine mark. Gln112 contributes to the NAD(+) binding site. Lys118 and Lys121 each carry N6-acetyllysine. 129–131 lines the NAD(+) pocket; sequence VGN. Substrate-binding residues include Asn131 and Arg162. His187 (proton acceptor) is an active-site residue. The residue at position 214 (Lys214) is an N6-succinyllysine. At Ser217 the chain carries Phosphoserine. Arg230 bears the Omega-N-methylarginine mark. Ser241 bears the Phosphoserine mark. Lys298 bears the N6-acetyllysine; alternate mark. Lys298 is subject to N6-succinyllysine; alternate. At Ser309 the chain carries Phosphoserine. Lys318 bears the N6-succinyllysine mark. A phosphoserine mark is found at Ser332 and Ser333.

Belongs to the LDH/MDH superfamily. MDH type 2 family. In terms of assembly, homodimer. Post-translationally, ISGylated. In terms of processing, acetylation at Lys-118 dramatically enhances enzymatic activity and promotes adipogenic differentiation.

It localises to the cytoplasm. It is found in the cytosol. The enzyme catalyses (S)-malate + NAD(+) = oxaloacetate + NADH + H(+). It carries out the reaction (2R)-2-hydroxy-3-(4-hydroxyphenyl)propanoate + NAD(+) = 3-(4-hydroxyphenyl)pyruvate + NADH + H(+). It catalyses the reaction (S)-2-hydroxyglutarate + NAD(+) = 2-oxoglutarate + NADH + H(+). Its function is as follows. Catalyzes the reduction of aromatic alpha-keto acids in the presence of NADH. Plays essential roles in the malate-aspartate shuttle and the tricarboxylic acid cycle, important in mitochondrial NADH supply for oxidative phosphorylation. Catalyzes the reduction of 2-oxoglutarate to 2-hydroxyglutarate, leading to elevated reactive oxygen species (ROS). The sequence is that of Malate dehydrogenase, cytoplasmic (Mdh1) from Rattus norvegicus (Rat).